The chain runs to 413 residues: NAD-dependent dihydropyrimidine dehydrogenase subunit PreT homolog (413 aa).

Glutamate 287 is a binding site for NAD(+).

The protein belongs to the NADH dehydrogenase family. Heterotetramer of 2 PreA and 2 PreT subunits.

The enzyme catalyses 5,6-dihydrouracil + NAD(+) = uracil + NADH + H(+). It carries out the reaction 5,6-dihydrothymine + NAD(+) = thymine + NADH + H(+). Its function is as follows. Involved in pyrimidine base degradation. Catalyzes physiologically the reduction of uracil to 5,6-dihydrouracil (DHU) by using NADH as a specific cosubstrate. It also catalyzes the reverse reaction and the reduction of thymine to 5,6-dihydrothymine (DHT). The polypeptide is NAD-dependent dihydropyrimidine dehydrogenase subunit PreT homolog (preT) (Salmonella typhi).